Consider the following 392-residue polypeptide: Imidazolonepropionase (392 aa).

Fe(3+) contacts are provided by His-69 and His-71. Zn(2+) contacts are provided by His-69 and His-71. Residues Arg-78, Tyr-136, and His-163 each contribute to the 4-imidazolone-5-propanoate site. Tyr-136 contacts N-formimidoyl-L-glutamate. Residue His-226 coordinates Fe(3+). A Zn(2+)-binding site is contributed by His-226. Residue Gln-229 coordinates 4-imidazolone-5-propanoate. A Fe(3+)-binding site is contributed by Asp-302. Asp-302 is a binding site for Zn(2+). 2 residues coordinate N-formimidoyl-L-glutamate: Asn-304 and Gly-306. Ser-307 contacts 4-imidazolone-5-propanoate.

This sequence belongs to the metallo-dependent hydrolases superfamily. HutI family. It depends on Zn(2+) as a cofactor. Fe(3+) serves as cofactor.

The protein localises to the cytoplasm. It catalyses the reaction 4-imidazolone-5-propanoate + H2O = N-formimidoyl-L-glutamate. It functions in the pathway amino-acid degradation; L-histidine degradation into L-glutamate; N-formimidoyl-L-glutamate from L-histidine: step 3/3. Its function is as follows. Catalyzes the hydrolytic cleavage of the carbon-nitrogen bond in imidazolone-5-propanoate to yield N-formimidoyl-L-glutamate. It is the third step in the universal histidine degradation pathway. This is Imidazolonepropionase from Salinispora tropica (strain ATCC BAA-916 / DSM 44818 / JCM 13857 / NBRC 105044 / CNB-440).